Here is a 247-residue protein sequence, read N- to C-terminus: Aspartate/glutamate leucyltransferase (247 aa).

Belongs to the R-transferase family. Bpt subfamily.

It is found in the cytoplasm. The catalysed reaction is N-terminal L-glutamyl-[protein] + L-leucyl-tRNA(Leu) = N-terminal L-leucyl-L-glutamyl-[protein] + tRNA(Leu) + H(+). It catalyses the reaction N-terminal L-aspartyl-[protein] + L-leucyl-tRNA(Leu) = N-terminal L-leucyl-L-aspartyl-[protein] + tRNA(Leu) + H(+). Functionally, functions in the N-end rule pathway of protein degradation where it conjugates Leu from its aminoacyl-tRNA to the N-termini of proteins containing an N-terminal aspartate or glutamate. In Chromohalobacter salexigens (strain ATCC BAA-138 / DSM 3043 / CIP 106854 / NCIMB 13768 / 1H11), this protein is Aspartate/glutamate leucyltransferase.